Consider the following 263-residue polypeptide: Ribonuclease 3 (263 aa).

The interval 1–23 (MPHSKNQRKHRHHSHSERRRQPK) is disordered. One can recognise an RNase III domain in the interval 35–164 (FDELLRTLNL…FVGALYLDQG (130 aa)). Glu77 is a Mg(2+) binding site. Residue Asp81 is part of the active site. Positions 150 and 153 each coordinate Mg(2+). Residue Glu153 is part of the active site. In terms of domain architecture, DRBM spans 190-259 (DFKSQLQEFI…AQQALITLSQ (70 aa)).

This sequence belongs to the ribonuclease III family. As to quaternary structure, homodimer. The cofactor is Mg(2+).

It localises to the cytoplasm. It carries out the reaction Endonucleolytic cleavage to 5'-phosphomonoester.. Its function is as follows. Digests double-stranded RNA. Involved in the processing of primary rRNA transcript to yield the immediate precursors to the large and small rRNAs (23S and 16S). Processes some mRNAs, and tRNAs when they are encoded in the rRNA operon. Processes pre-crRNA and tracrRNA of type II CRISPR loci if present in the organism. This is Ribonuclease 3 from Halalkalibacterium halodurans (strain ATCC BAA-125 / DSM 18197 / FERM 7344 / JCM 9153 / C-125) (Bacillus halodurans).